We begin with the raw amino-acid sequence, 450 residues long: Exodeoxyribonuclease 7 large subunit (450 aa).

The protein belongs to the XseA family. In terms of assembly, heterooligomer composed of large and small subunits.

The protein localises to the cytoplasm. The enzyme catalyses Exonucleolytic cleavage in either 5'- to 3'- or 3'- to 5'-direction to yield nucleoside 5'-phosphates.. Its function is as follows. Bidirectionally degrades single-stranded DNA into large acid-insoluble oligonucleotides, which are then degraded further into small acid-soluble oligonucleotides. The chain is Exodeoxyribonuclease 7 large subunit from Listeria monocytogenes serovar 1/2a (strain ATCC BAA-679 / EGD-e).